A 370-amino-acid chain; its full sequence is tRNA/tmRNA (uracil-C(5))-methyltransferase (370 aa).

Gln-195, Tyr-221, Asn-226, Glu-242, and Asp-302 together coordinate S-adenosyl-L-methionine. The active-site Nucleophile is the Cys-327. The Proton acceptor role is filled by Glu-361.

This sequence belongs to the class I-like SAM-binding methyltransferase superfamily. RNA M5U methyltransferase family. TrmA subfamily.

It carries out the reaction uridine(54) in tRNA + S-adenosyl-L-methionine = 5-methyluridine(54) in tRNA + S-adenosyl-L-homocysteine + H(+). The enzyme catalyses uridine(341) in tmRNA + S-adenosyl-L-methionine = 5-methyluridine(341) in tmRNA + S-adenosyl-L-homocysteine + H(+). Dual-specificity methyltransferase that catalyzes the formation of 5-methyluridine at position 54 (m5U54) in all tRNAs, and that of position 341 (m5U341) in tmRNA (transfer-mRNA). The chain is tRNA/tmRNA (uracil-C(5))-methyltransferase from Wolinella succinogenes (strain ATCC 29543 / DSM 1740 / CCUG 13145 / JCM 31913 / LMG 7466 / NCTC 11488 / FDC 602W) (Vibrio succinogenes).